Consider the following 509-residue polypeptide: Telomeric repeat-binding factor 2-interacting protein 1 (509 aa).

Positions 1–91 constitute a BRCT domain; the sequence is MAALGGLTHS…KLLDVDDYRL (91 aa). Positions 93 to 168 are disordered; that stretch reads GSHGRPRKSQ…RKKENKMDCS (76 aa). Residues 115 to 127 are compositionally biased toward polar residues; it reads VGESSQESDQKQQ. Residues 159 to 168 are compositionally biased toward basic and acidic residues; sequence RKKENKMDCS. Positions 185 to 239 constitute a Myb-like domain; the sequence is RRNVFTEKEDVAIMLYVRENAPHRGTGVSLWKEMEQKQVVKRTWQAIKNRYFRYL. Disordered stretches follow at residues 249–359 and 399–423; these read LTDD…ENQD and DLPSSQSQTQVDEVSSSPDASESEG. 2 stretches are compositionally biased toward basic and acidic residues: residues 286–296 and 321–344; these read GVAEKTGEKLS and VEERGQEVTEGAIKRSEGNKKSTE. Residues 401-418 show a composition bias toward polar residues; the sequence is PSSQSQTQVDEVSSSPDA. The Nuclear localization signal motif lies at 493–509; the sequence is QKYGADNVAKRVAFLAS.

Belongs to the RAP1 family. Homodimer. Component of the shelterin complex (telosome). Interacts with terf2; the interaction is direct.

Its subcellular location is the nucleus. The protein localises to the chromosome. It localises to the telomere. Its function is as follows. Acts both as a regulator of telomere function and as a transcription regulator. Involved in the regulation of telomere length and protection as a component of the shelterin complex (telosome). Does not bind DNA directly: recruited to telomeric double-stranded 5'-TTAGGG-3' repeats via its interaction with terf2. Independently of its function in telomeres, also acts as a transcription regulator: recruited to extratelomeric 5'-TTAGGG-3' sites via its association with terf2 or other factors, and regulates gene expression. The protein is Telomeric repeat-binding factor 2-interacting protein 1 (terf2ip) of Xenopus tropicalis (Western clawed frog).